We begin with the raw amino-acid sequence, 75 residues long: Iota-conotoxin-like R11.3 (75 aa).

The N-terminal stretch at 1-19 (MKLCLTFLLVLMILASVTG) is a signal peptide. Positions 20 to 34 (EKLSEQTLRRAARKN) are excised as a propeptide. Disulfide bonds link cysteine 39/cysteine 53, cysteine 46/cysteine 58, cysteine 52/cysteine 63, and cysteine 57/cysteine 70.

The protein belongs to the conotoxin I1 superfamily. Expressed by the venom duct.

Its subcellular location is the secreted. Functionally, iota-conotoxins bind to voltage-gated sodium channels (Nav) and act as agonists by shifting the voltage-dependence of activation to more hyperpolarized levels. Produces general excitatory symptoms. This is Iota-conotoxin-like R11.3 from Conus radiatus (Rayed cone).